A 778-amino-acid chain; its full sequence is Protein SPT2 homolog (778 aa).

Disordered regions lie at residues 1 to 21, 50 to 625, and 639 to 685; these read MDFH…GIAK, KKDE…AKPK, and VPKS…DDDD. An important for interaction with DNA region spans residues 1–665; that stretch reads MDFHSVLKMA…PGHRPAMRPP (665 aa). Positions 44–83 form a coiled coil; sequence VQAFLRKKDEESRRKETVEKRKKEDLLAKRKELKHDRKAR. The segment covering 50 to 78 has biased composition (basic and acidic residues); the sequence is KKDEESRRKETVEKRKKEDLLAKRKELKH. Residues 114 to 135 are compositionally biased toward acidic residues; sequence EEDQNDNMAAEGEEYMTEEELY. The span at 153–167 shows a compositional bias: pro residues; it reads QKVPKPAPGKKPPTP. Residues 190 to 227 are compositionally biased toward basic and acidic residues; the sequence is RPVKKEERLRTAEELKELEFLERKAQKADRKDPKRNEQ. Residues 193 to 221 adopt a coiled-coil conformation; the sequence is KKEERLRTAEELKELEFLERKAQKADRKD. Polar residues predominate over residues 242-269; it reads LKGTHSGNSKSSSTEQNGTIRKSSSDTG. Over residues 270-286 the composition is skewed to basic and acidic residues; it reads SRTEKSGSVFHTKESKK. The span at 312–335 shows a compositional bias: low complexity; that stretch reads SSQPSAASNSAFGRPSGSARPSGS. 2 stretches are compositionally biased toward gly residues: residues 336–357 and 365–384; these read SGPG…GGSA and GGSG…GKPI. Residues 385 to 394 are compositionally biased toward low complexity; sequence GGLHSSHGSG. The span at 395-417 shows a compositional bias: gly residues; the sequence is KPTGGTGSGSGKPTGASGSGSGK. Composition is skewed to low complexity over residues 418–493 and 506–559; these read PTGS…SGSA and GSGS…PSSS. The segment covering 588-604 has biased composition (polar residues); the sequence is VRPNSTSVPGSARSSLG. Positions 662 to 671 are enriched in pro residues; it reads MRPPGPPLPP. Residues 666–778 form an important for interaction with histones region; that stretch reads GPPLPPITSS…QLKAAKKMSR (113 aa). A coiled-coil region spans residues 735 to 778; it reads REQQKEEARSLRLGIQEDLEELQREEEELKRKAKQLKAAKKMSR.

This sequence belongs to the SPT2 family. In terms of assembly, interacts with histones. Interacts with a heterotetrameric complex formed by histone H3 and H4, especially when the histone tetramer is not bound to DNA.

The protein localises to the nucleus. The protein resides in the nucleolus. Functionally, histone chaperone that stabilizes pre-existing histone tetramers and regulates replication-independent histone exchange on chromatin. Required for normal chromatin refolding in the coding region of transcribed genes, and for the suppression of spurious transcription. Binds DNA and histones and promotes nucleosome assembly (in vitro). Facilitates formation of tetrameric histone complexes containing histone H3 and H4. Modulates RNA polymerase 1-mediated transcription. Binds DNA, with a preference for branched DNA species, such as Y-form DNA and Holliday junction DNA. This chain is Protein SPT2 homolog (spty2d1), found in Xenopus tropicalis (Western clawed frog).